The chain runs to 136 residues: SPbeta prophage-derived uncharacterized protein YonI (136 aa).

In Bacillus subtilis (strain 168), this protein is SPbeta prophage-derived uncharacterized protein YonI (yonI).